The following is a 478-amino-acid chain: Dynein regulatory complex subunit 4 (478 aa).

Residues 1–12 (MAPKRRGKKGKA) show a composition bias toward basic residues. A disordered region spans residues 1–32 (MAPKRRGKKGKAKGNAVVDGVAPEDMSKEQVE). A regulates microtubule-binding region spans residues 1–114 (MAPKRRGKKG…LLYEHQNNLA (114 aa)). 2 coiled-coil regions span residues 24 to 201 (EDMS…DELD) and 243 to 427 (NNLA…LARV). The tract at residues 115 to 258 (EVKTEGTVVM…NSLKEQMEDM (144 aa)) is microtubule-binding. The segment at 357 to 478 (QQKTGFKNLV…GPAGLVGAPT (122 aa)) is interaction with SMO.

This sequence belongs to the DRC4 family. As to quaternary structure, component of the nexin-dynein regulatory complex (N-DRC). Interacts with microtubules. Interacts with SMO. Interacts (via coiled-coil domains) with RAB3B (in GTP-bound form). Interacts with DRC1. Interacts with DRC7.

Its subcellular location is the cytoplasm. The protein resides in the cytoskeleton. It localises to the cell projection. The protein localises to the cilium. It is found in the flagellum. Its subcellular location is the cilium axoneme. The protein resides in the cilium basal body. It localises to the golgi apparatus. The protein localises to the flagellum axoneme. Its function is as follows. Component of the nexin-dynein regulatory complex (N-DRC), a key regulator of ciliary/flagellar motility which maintains the alignment and integrity of the distal axoneme and regulates microtubule sliding in motile axonemes. Plays an important role in the assembly of the N-DRC linker. Plays dual roles at both the primary (or non-motile) cilia to regulate hedgehog signaling and in motile cilia to coordinate cilia movement. Required for proper motile cilia functioning. Positively regulates ciliary smoothened (SMO)-dependent Hedgehog (Hh) signaling pathway by facilitating the trafficking of SMO into the cilium and the stimulation of SMO activity in a GRK2-dependent manner. The chain is Dynein regulatory complex subunit 4 (Gas8) from Rattus norvegicus (Rat).